A 359-amino-acid chain; its full sequence is Cyclin-Y-like protein 1 (359 aa).

3 positions are modified to phosphoserine: Ser67, Ser105, and Ser112. One can recognise a Cyclin N-terminal domain in the interval 145–267; sequence VTLAIYYHIK…CQILKDITVE (123 aa). Ser344 carries the post-translational modification Phosphoserine.

It belongs to the cyclin family. Cyclin Y subfamily. In terms of assembly, interacts with CDK16; this interaction mutually increases the stability of CDK16 and CCNYL1 and increases the kinase activity of CDK16.

The protein resides in the cell membrane. In terms of biological role, key regulator of Wnt signaling implicated in various biological processes including male fertility, embryonic neurogenesis and cortex development. Activates the cyclin-dependent kinase CDK16, and promotes sperm maturation. The polypeptide is Cyclin-Y-like protein 1 (Homo sapiens (Human)).